Reading from the N-terminus, the 600-residue chain is Alpha pinene synthase, chloroplastic (600 aa).

A disordered region spans residues 1–26 (MSSISMHARPLNISAANNHHPSWDRR). The N-terminal 31 residues, 1-31 (MSSISMHARPLNISAANNHHPSWDRRVSKPR), are a transit peptide targeting the chloroplast. The Mg(2+) site is built by aspartate 354, aspartate 358, aspartate 498, and glutamate 506. The DDXXD motif motif lies at 354 to 358 (DDVYD).

It belongs to the terpene synthase family. Tpsa subfamily. It depends on Mg(2+) as a cofactor. Requires Mn(2+) as cofactor. In terms of tissue distribution, barely detectable in leaves.

The protein localises to the plastid. The protein resides in the chloroplast. It catalyses the reaction (2E)-geranyl diphosphate = alpha-pinene + diphosphate. It participates in secondary metabolite biosynthesis; terpenoid biosynthesis. In terms of biological role, monoterpene synthase involved in the biosynthesis of volatile compounds widely used in aromatherapy and folk medicine, and present in culinary herbs. Mediates the conversion of (2E)-geranyl diphosphate (GPP) into alpha-pinene and, as minor compounds, into alpha-phellandrene, limonene and alpha-terpinolene. The chain is Alpha pinene synthase, chloroplastic from Lavandula stoechas (Butterfly lavender).